The primary structure comprises 158 residues: 2-C-methyl-D-erythritol 2,4-cyclodiphosphate synthase (158 aa).

Asp8 and His10 together coordinate a divalent metal cation. Residues 8–10 (DVH) and 34–35 (HS) each bind 4-CDP-2-C-methyl-D-erythritol 2-phosphate. Position 42 (His42) interacts with a divalent metal cation. Residues 56 to 58 (DIG), 132 to 135 (TTNE), and Arg142 contribute to the 4-CDP-2-C-methyl-D-erythritol 2-phosphate site.

It belongs to the IspF family. As to quaternary structure, homotrimer. A divalent metal cation is required as a cofactor.

It carries out the reaction 4-CDP-2-C-methyl-D-erythritol 2-phosphate = 2-C-methyl-D-erythritol 2,4-cyclic diphosphate + CMP. It functions in the pathway isoprenoid biosynthesis; isopentenyl diphosphate biosynthesis via DXP pathway; isopentenyl diphosphate from 1-deoxy-D-xylulose 5-phosphate: step 4/6. Involved in the biosynthesis of isopentenyl diphosphate (IPP) and dimethylallyl diphosphate (DMAPP), two major building blocks of isoprenoid compounds. Catalyzes the conversion of 4-diphosphocytidyl-2-C-methyl-D-erythritol 2-phosphate (CDP-ME2P) to 2-C-methyl-D-erythritol 2,4-cyclodiphosphate (ME-CPP) with a corresponding release of cytidine 5-monophosphate (CMP). This Chlorobium phaeobacteroides (strain DSM 266 / SMG 266 / 2430) protein is 2-C-methyl-D-erythritol 2,4-cyclodiphosphate synthase.